We begin with the raw amino-acid sequence, 1139 residues long: Liprin-alpha (1139 aa).

4 coiled-coil regions span residues 30 to 144 (PSDR…SLRM), 172 to 298 (EHHK…KNQI), 329 to 517 (IRDL…AQFQ), and 655 to 701 (QDAQ…EFYD). 2 disordered regions span residues 700 to 720 (YDDQ…LDNM) and 764 to 847 (NQFD…DRRK). 2 stretches are compositionally biased toward polar residues: residues 704-719 (GIST…QLDN) and 778-787 (PASSVASSTD). 3 consecutive SAM domains span residues 867-933 (WNGP…MVSL), 952-1016 (NHEY…LKKV), and 1040-1109 (WSNE…LVND).

The protein belongs to the liprin family. Liprin-alpha subfamily. As to expression, detected in vulval muscle and other cells near the vulva; in neurons located in the lateral ganglion, posterior ganglion, ventral cord and lateral body; and in pharyngeal and body wall muscle cells.

The protein localises to the synapse. Its function is as follows. May play a role in regulating the structure of the neuronal region, called the active zone, from which synaptic vesicles send neurotransmitter signals across the synapse. This may be in association with the liprin-beta protein hlb-1. The protein is Liprin-alpha of Caenorhabditis elegans.